The chain runs to 489 residues: Glycogen synthase (489 aa).

Residue lysine 15 coordinates ADP-alpha-D-glucose.

The protein belongs to the glycosyltransferase 1 family. Bacterial/plant glycogen synthase subfamily.

The catalysed reaction is [(1-&gt;4)-alpha-D-glucosyl](n) + ADP-alpha-D-glucose = [(1-&gt;4)-alpha-D-glucosyl](n+1) + ADP + H(+). It participates in glycan biosynthesis; glycogen biosynthesis. In terms of biological role, synthesizes alpha-1,4-glucan chains using ADP-glucose. This Francisella tularensis subsp. mediasiatica (strain FSC147) protein is Glycogen synthase.